A 282-amino-acid chain; its full sequence is 5'-adenylylsulfate reductase-like 2 (282 aa).

A signal peptide spans 1-19; it reads MRWWPALPLLLLAVAVAGA. In terms of domain architecture, Thioredoxin spans 20 to 159; the sequence is GDAAPVCTRP…LAAFYNDVSG (140 aa). N134 carries N-linked (GlcNAc...) asparagine glycosylation. A helical transmembrane segment spans residues 205 to 225; it reads AASFVILRLLYLFYPKITAFV.

Its subcellular location is the membrane. This is 5'-adenylylsulfate reductase-like 2 (APRL2) from Oryza sativa subsp. japonica (Rice).